The chain runs to 433 residues: Steroid hormone receptor ERR2 (433 aa).

The tract at residues 1–38 (MSSEDRHLGSSCGSFIKTEPSSPSSGIDALSHHSPSGS) is disordered. Residues 93 to 211 (YMLNAIPKRL…SPPAKKPLTK (119 aa)) are interaction with NANOG. The segment at residues 100-186 (KRLCLVCGDI…RVRGGRQKYK (87 aa)) is a DNA-binding region (nuclear receptor). 2 consecutive NR C4-type zinc fingers follow at residues 103-123 (CLVC…CEAC) and 139-163 (CPAT…FMKC). The tract at residues 203-433 (PPAKKPLTKI…LFLEMLEAKV (231 aa)) is essential for ESRRB transcriptional activity and interaction with NCOA3. An NR LBD domain is found at 208-432 (PLTKIVSNLL…KLFLEMLEAK (225 aa)).

Belongs to the nuclear hormone receptor family. NR3 subfamily. As to quaternary structure, binds DNA as a monomer. Interacts with NR0B1; represses ESRRB activity at the GATA6 promoter. Interacts with NANOG; reciprocally modulates their transcriptional activities and activates POU5F1 expression. Interacts with NCOA3; mediates the interaction between ESRRB and RNA polymerase II complexes and allows NCOA3 corecruitment to ESRRB, KLF4, NANOG, and SOX2 enhancer regions to trigger ESRRB-dependent gene activation involved in self-renewal and pluripotency. Interacts with KDM1A; co-occupes the core set of ESRRB targets including ELF5 and EOMES. Interacts with the multiprotein complex Integrator, at least composed of INTS1, INTS2, INTS3, INTS4, INTS5, INTS6, INTS7, INTS8, INTS9/RC74, INTS10, INTS11/CPSF3L and INTS12; ESRRB is probably not a core component of the integrator complex and associates to integrator via its interaction with INTS1 and INTS9; attracts the transcriptional machinery. Interacts with JARID2. Interacts with POU5F1; recruits ESRRB near the POU5F1-SOX2 element in the NANOG proximal promoter leading to activation of NANOG expression; the interaction is DNA independent. Post-translationally, acetylated by PCAF/KAT2 (in vitro). Highly expressed in undifferentiated ESCs. Expressed in immature horizontal cells and in rod photoreceptors at intermediate and late stages of differentiation. Expressed in endolymph-producing epithelial cells.

It localises to the nucleus. Its subcellular location is the cytoplasm. It is found in the chromosome. Transcription factor that binds a canonical ESRRB recognition (ERRE) sequence 5'TCAAGGTCA-3' localized on promoter and enhancer of targets genes regulating their expression or their transcriptional activity. Plays a role, in a LIF-independent manner, in maintainance of self-renewal and pluripotency of embryonic and trophoblast stem cells through different signaling pathways including FGF signaling pathway and Wnt signaling pathways. Involved in morula development (2-16 cells embryos) by acting as a regulator at the 8-cell stage. Upon FGF signaling pathway activation, interacts with KDM1A by directly binding to enhancer site of ELF5 and EOMES and activating their transcription leading to self-renewal of trophoblast stem cells. Also regulates expression of multiple rod-specific genes and is required for survival of this cell type. Plays a role as transcription factor activator of GATA6, NR0B1, POU5F1 and PERM1. Plays a role as transcription factor repressor of NFE2L2 transcriptional activity and ESR1 transcriptional activity. During mitosis remains bound to a subset of interphase target genes, including pluripotency regulators, through the canonical ESRRB recognition (ERRE) sequence, leading to their transcriptional activation in early G1 phase. Can coassemble on structured DNA elements with other transcription factors like SOX2, POU5F1, KDM1A and NCOA3 to trigger ESRRB-dependent gene activation. This mechanism, in the case of SOX2 corecruitment prevents the embryonic stem cells (ESCs) to epiblast stem cells (EpiSC) transition through positive regulation of NR0B1 that inhibits the EpiSC transcriptional program. Also plays a role inner ear development by controlling expression of ion channels and transporters and in early placentation. The protein is Steroid hormone receptor ERR2 of Mus musculus (Mouse).